The sequence spans 263 residues: Chaperone protein ClpE (263 aa).

Residues 1–34 (MSKRNAVTTFFTNRVTKALGMTLALMMTCQSAMA) form the signal peptide. Residues 238 to 255 (QKKTPTSSGQKASDSLVN) show a composition bias toward polar residues. The segment at 238-263 (QKKTPTSSGQKASDSLVNPSDKADKK) is disordered.

It belongs to the periplasmic pilus chaperone family.

It localises to the periplasm. In terms of biological role, involved in the biogenesis of the CS31A capsule-like antigen. This Escherichia coli protein is Chaperone protein ClpE (clpE).